The sequence spans 273 residues: 4-hydroxy-tetrahydrodipicolinate reductase (273 aa).

12 to 17 (GAMGRM) lines the NAD(+) pocket. Residue Lys-39 participates in NADP(+) binding. Residues 102 to 104 (GTT) and 126 to 129 (ASNF) contribute to the NAD(+) site. The Proton donor/acceptor role is filled by His-159. His-160 is a binding site for (S)-2,3,4,5-tetrahydrodipicolinate. Lys-163 (proton donor) is an active-site residue. 169 to 170 (GT) is a (S)-2,3,4,5-tetrahydrodipicolinate binding site.

The protein belongs to the DapB family. In terms of assembly, homotetramer.

Its subcellular location is the cytoplasm. The enzyme catalyses (S)-2,3,4,5-tetrahydrodipicolinate + NAD(+) + H2O = (2S,4S)-4-hydroxy-2,3,4,5-tetrahydrodipicolinate + NADH + H(+). The catalysed reaction is (S)-2,3,4,5-tetrahydrodipicolinate + NADP(+) + H2O = (2S,4S)-4-hydroxy-2,3,4,5-tetrahydrodipicolinate + NADPH + H(+). Its pathway is amino-acid biosynthesis; L-lysine biosynthesis via DAP pathway; (S)-tetrahydrodipicolinate from L-aspartate: step 4/4. In terms of biological role, catalyzes the conversion of 4-hydroxy-tetrahydrodipicolinate (HTPA) to tetrahydrodipicolinate. In Buchnera aphidicola subsp. Schizaphis graminum (strain Sg), this protein is 4-hydroxy-tetrahydrodipicolinate reductase.